The sequence spans 229 residues: Cytochrome c oxidase subunit 2 (229 aa).

Residues 1 to 26 (MATWSNLGLQDSASPLMEQLNFFHDH) are Mitochondrial intermembrane-facing. The chain crosses the membrane as a helical span at residues 27-48 (TLLILIMITILVGYLMLMLFFN). Over 49–62 (KFTNRFLLHGQTIE) the chain is Mitochondrial matrix. Residues 63-82 (IIWTILPAIVLMFIALPSLR) form a helical membrane-spanning segment. At 83 to 229 (ILYLLDEINS…IKWITAMNSN (147 aa)) the chain is on the mitochondrial intermembrane side. Residues His-161, Cys-196, Glu-198, Cys-200, His-204, and Met-207 each coordinate Cu cation. Mg(2+) is bound at residue Glu-198.

The protein belongs to the cytochrome c oxidase subunit 2 family. In terms of assembly, component of the cytochrome c oxidase (complex IV, CIV), a multisubunit enzyme composed of a catalytic core of 3 subunits and several supernumerary subunits. The complex exists as a monomer or a dimer and forms supercomplexes (SCs) in the inner mitochondrial membrane with ubiquinol-cytochrome c oxidoreductase (cytochrome b-c1 complex, complex III, CIII). The cofactor is Cu cation.

It localises to the mitochondrion inner membrane. It carries out the reaction 4 Fe(II)-[cytochrome c] + O2 + 8 H(+)(in) = 4 Fe(III)-[cytochrome c] + 2 H2O + 4 H(+)(out). Functionally, component of the cytochrome c oxidase, the last enzyme in the mitochondrial electron transport chain which drives oxidative phosphorylation. The respiratory chain contains 3 multisubunit complexes succinate dehydrogenase (complex II, CII), ubiquinol-cytochrome c oxidoreductase (cytochrome b-c1 complex, complex III, CIII) and cytochrome c oxidase (complex IV, CIV), that cooperate to transfer electrons derived from NADH and succinate to molecular oxygen, creating an electrochemical gradient over the inner membrane that drives transmembrane transport and the ATP synthase. Cytochrome c oxidase is the component of the respiratory chain that catalyzes the reduction of oxygen to water. Electrons originating from reduced cytochrome c in the intermembrane space (IMS) are transferred via the dinuclear copper A center (CU(A)) of subunit 2 and heme A of subunit 1 to the active site in subunit 1, a binuclear center (BNC) formed by heme A3 and copper B (CU(B)). The BNC reduces molecular oxygen to 2 water molecules using 4 electrons from cytochrome c in the IMS and 4 protons from the mitochondrial matrix. The sequence is that of Cytochrome c oxidase subunit 2 (COII) from Simulium vittatum (Striped black fly).